Reading from the N-terminus, the 460-residue chain is Bifunctional protein GlmU (460 aa).

Residues 1-232 (MENVAAIILA…SDEIMGVNDR (232 aa)) form a pyrophosphorylase region. UDP-N-acetyl-alpha-D-glucosamine contacts are provided by residues 9-12 (LAAG), lysine 23, glutamine 75, and 80-81 (GT). Aspartate 105 contributes to the Mg(2+) binding site. 4 residues coordinate UDP-N-acetyl-alpha-D-glucosamine: glycine 142, glutamate 157, asparagine 172, and asparagine 230. Asparagine 230 lines the Mg(2+) pocket. Positions 233-253 (AQLAQAARILRRRINRDLMLS) are linker. The segment at 254 to 460 (GVSLVDPEQT…GWRIRMKKKT (207 aa)) is N-acetyltransferase. UDP-N-acetyl-alpha-D-glucosamine is bound by residues arginine 336 and lysine 354. Histidine 366 (proton acceptor) is an active-site residue. UDP-N-acetyl-alpha-D-glucosamine is bound by residues tyrosine 369 and asparagine 380. Residues 389 to 390 (NY), serine 408, alanine 426, and arginine 443 contribute to the acetyl-CoA site.

The protein in the N-terminal section; belongs to the N-acetylglucosamine-1-phosphate uridyltransferase family. This sequence in the C-terminal section; belongs to the transferase hexapeptide repeat family. In terms of assembly, homotrimer. Mg(2+) is required as a cofactor.

The protein resides in the cytoplasm. It catalyses the reaction alpha-D-glucosamine 1-phosphate + acetyl-CoA = N-acetyl-alpha-D-glucosamine 1-phosphate + CoA + H(+). The catalysed reaction is N-acetyl-alpha-D-glucosamine 1-phosphate + UTP + H(+) = UDP-N-acetyl-alpha-D-glucosamine + diphosphate. Its pathway is nucleotide-sugar biosynthesis; UDP-N-acetyl-alpha-D-glucosamine biosynthesis; N-acetyl-alpha-D-glucosamine 1-phosphate from alpha-D-glucosamine 6-phosphate (route II): step 2/2. It functions in the pathway nucleotide-sugar biosynthesis; UDP-N-acetyl-alpha-D-glucosamine biosynthesis; UDP-N-acetyl-alpha-D-glucosamine from N-acetyl-alpha-D-glucosamine 1-phosphate: step 1/1. It participates in bacterial outer membrane biogenesis; LPS lipid A biosynthesis. Its function is as follows. Catalyzes the last two sequential reactions in the de novo biosynthetic pathway for UDP-N-acetylglucosamine (UDP-GlcNAc). The C-terminal domain catalyzes the transfer of acetyl group from acetyl coenzyme A to glucosamine-1-phosphate (GlcN-1-P) to produce N-acetylglucosamine-1-phosphate (GlcNAc-1-P), which is converted into UDP-GlcNAc by the transfer of uridine 5-monophosphate (from uridine 5-triphosphate), a reaction catalyzed by the N-terminal domain. The protein is Bifunctional protein GlmU of Pelobacter propionicus (strain DSM 2379 / NBRC 103807 / OttBd1).